The primary structure comprises 192 residues: Ribosome maturation factor RimP (192 aa).

This sequence belongs to the RimP family.

The protein localises to the cytoplasm. Functionally, required for maturation of 30S ribosomal subunits. This Mycobacterium sp. (strain JLS) protein is Ribosome maturation factor RimP.